We begin with the raw amino-acid sequence, 212 residues long: Kynurenine formamidase (212 aa).

Residue Trp-18 participates in substrate binding. Positions 48, 52, and 54 each coordinate Zn(2+). Catalysis depends on His-58, which acts as the Proton donor/acceptor. 2 residues coordinate Zn(2+): His-160 and Glu-172.

This sequence belongs to the Cyclase 1 superfamily. KynB family. As to quaternary structure, homodimer. The cofactor is Zn(2+).

The catalysed reaction is N-formyl-L-kynurenine + H2O = L-kynurenine + formate + H(+). Its pathway is amino-acid degradation; L-tryptophan degradation via kynurenine pathway; L-kynurenine from L-tryptophan: step 2/2. Functionally, catalyzes the hydrolysis of N-formyl-L-kynurenine to L-kynurenine, the second step in the kynurenine pathway of tryptophan degradation. The chain is Kynurenine formamidase from Paraburkholderia phytofirmans (strain DSM 17436 / LMG 22146 / PsJN) (Burkholderia phytofirmans).